The chain runs to 952 residues: Germ layers disorganized gldi-3 (952 aa).

One can recognise an FHA domain in the interval 39–100; the sequence is KSFGRATTND…NGTYINDRRL (62 aa). Disordered stretches follow at residues 174 to 220, 483 to 639, and 652 to 866; these read IGPR…MPST, GTPK…ESTV, and AAQS…KERC. Polar residues-rich tracts occupy residues 179 to 195 and 202 to 220; these read PSTT…STNG and NRAS…MPST. Over residues 523 to 537 the composition is skewed to acidic residues; it reads EESEILDVVGTDEPD. Positions 553–568 are enriched in basic and acidic residues; that stretch reads PEDHGRQTQNKIDKNV. Polar residues-rich tracts occupy residues 569 to 584 and 600 to 620; these read RMSS…TPSA and VTSS…NPVS. Positions 662 to 679 are enriched in low complexity; sequence SVSNTTSSTSASLTTSSV. The segment covering 685 to 706 has biased composition (basic and acidic residues); the sequence is TSSKENTDQKRAVDDSSDESAR. Residues 715-724 show a composition bias toward low complexity; that stretch reads SATPSSTPAE. Residues 725-742 are compositionally biased toward basic and acidic residues; sequence SSKRKQKDTSSRKMKQLD. Over residues 761 to 772 the composition is skewed to basic residues; that stretch reads TKRRDKARRSTR. Residues 789-800 show a composition bias toward acidic residues; sequence VEDEDETDDVQE. Composition is skewed to basic and acidic residues over residues 823–832 and 856–866; these read IKERKTKDKD and PPKTEPSKERC.

The protein localises to the nucleus. Its function is as follows. Potential transcription factor that may play a role in the regulation of genes involved in cell cycle G1/S transition. May bind to regulatory elements of genes. This Caenorhabditis elegans protein is Germ layers disorganized gldi-3.